The chain runs to 278 residues: Coiled-coil domain-containing protein 121 (278 aa).

Coiled-coil stretches lie at residues 1–30 and 105–243; these read MTDL…REKL and QAMR…LIQA. Positions 253-278 are disordered; sequence QCLNRQDVPKTTPSLPQGTKSRINPK.

This chain is Coiled-coil domain-containing protein 121 (CCDC121), found in Homo sapiens (Human).